We begin with the raw amino-acid sequence, 335 residues long: Glycerol-3-phosphate dehydrogenase [NAD(P)+] (335 aa).

Lys-109 serves as a coordination point for NADPH. Positions 109, 141, and 143 each coordinate sn-glycerol 3-phosphate. Ala-145 is a binding site for NADPH. The sn-glycerol 3-phosphate site is built by Lys-196, Asp-249, Ser-259, Arg-260, and Asn-261. Residue Lys-196 is the Proton acceptor of the active site. An NADPH-binding site is contributed by Arg-260. Glu-283 serves as a coordination point for NADPH.

This sequence belongs to the NAD-dependent glycerol-3-phosphate dehydrogenase family.

Its subcellular location is the cytoplasm. It carries out the reaction sn-glycerol 3-phosphate + NAD(+) = dihydroxyacetone phosphate + NADH + H(+). The enzyme catalyses sn-glycerol 3-phosphate + NADP(+) = dihydroxyacetone phosphate + NADPH + H(+). It functions in the pathway membrane lipid metabolism; glycerophospholipid metabolism. Its function is as follows. Catalyzes the reduction of the glycolytic intermediate dihydroxyacetone phosphate (DHAP) to sn-glycerol 3-phosphate (G3P), the key precursor for phospholipid synthesis. The protein is Glycerol-3-phosphate dehydrogenase [NAD(P)+] of Mycoplasma mobile (strain ATCC 43663 / 163K / NCTC 11711) (Mesomycoplasma mobile).